A 302-amino-acid chain; its full sequence is Oxygen-dependent coproporphyrinogen-III oxidase (302 aa).

Substrate is bound at residue Ser94. 2 residues coordinate a divalent metal cation: His98 and His108. His108 serves as the catalytic Proton donor. 110 to 112 (NVR) provides a ligand contact to substrate. A divalent metal cation contacts are provided by His147 and His177. The segment at 242–277 (YVEFNLVYDRGTLFGLQTGGRTESILMSMPPLVRWQ) is important for dimerization. 260 to 262 (GGR) provides a ligand contact to substrate.

The protein belongs to the aerobic coproporphyrinogen-III oxidase family. Homodimer. A divalent metal cation is required as a cofactor.

It localises to the cytoplasm. The catalysed reaction is coproporphyrinogen III + O2 + 2 H(+) = protoporphyrinogen IX + 2 CO2 + 2 H2O. It participates in porphyrin-containing compound metabolism; protoporphyrin-IX biosynthesis; protoporphyrinogen-IX from coproporphyrinogen-III (O2 route): step 1/1. Functionally, involved in the heme biosynthesis. Catalyzes the aerobic oxidative decarboxylation of propionate groups of rings A and B of coproporphyrinogen-III to yield the vinyl groups in protoporphyrinogen-IX. The polypeptide is Oxygen-dependent coproporphyrinogen-III oxidase (Shewanella putrefaciens (strain CN-32 / ATCC BAA-453)).